A 318-amino-acid chain; its full sequence is Retinol dehydrogenase 11 (318 aa).

The chain crosses the membrane as a helical; Signal-anchor for type II membrane protein span at residues 1 to 21 (MVELMFPLLLLLLPFLLYMAA). At 22–318 (PQIRKMLSSG…SCDLLGLPID (297 aa)) the chain is on the cytoplasmic side. Residue 48-54 (GANTGIG) participates in NADP(+) binding. Residue Lys-112 is modified to N6-acetyllysine. Substrate is bound at residue Ser-177. The active-site Proton acceptor is the Tyr-202.

Belongs to the short-chain dehydrogenases/reductases (SDR) family. Interacts with SELENOF. In terms of processing, not glycosylated. Predominantly expressed in the epithelial cells of prostate, in both basal and luminal secretory cell populations. Expressed at low levels in spleen, thymus, testis, ovary, small intestine, colon, peripherical blood leukocytes, kidney, adrenal gland and fetal liver. Not detected in prostatic fibromuscular stromal cells, endothelial cells, or infiltrating lymphocytes.

It localises to the endoplasmic reticulum membrane. The catalysed reaction is all-trans-retinol + NADP(+) = all-trans-retinal + NADPH + H(+). It catalyses the reaction 11-cis-retinol + NADP(+) = 11-cis-retinal + NADPH + H(+). The enzyme catalyses 9-cis-retinol + NADP(+) = 9-cis-retinal + NADPH + H(+). It carries out the reaction 13-cis-retinol + NADP(+) = 13-cis-retinal + NADPH + H(+). It participates in cofactor metabolism; retinol metabolism. With respect to regulation, SELENOF decreases the retinol dehydrogenase activity. Functionally, retinol dehydrogenase with a clear preference for NADP. Displays high activity towards 9-cis, 11-cis and all-trans-retinol, and to a lesser extent on 13-cis-retinol. Exhibits a low reductive activity towards unsaturated medium-chain aldehydes such as cis -6-nonenal and no activity toward nonanal or 4-hydroxy-nonenal. Has no dehydrogenase activity towards steroid. The polypeptide is Retinol dehydrogenase 11 (RDH11) (Homo sapiens (Human)).